Reading from the N-terminus, the 485-residue chain is Glutamate--tRNA ligase (485 aa).

The 'HIGH' region motif lies at 12–22; sequence PSPTGYMHVGN. Zn(2+) is bound by residues Cys109, Cys111, Cys136, and His138. A 'KMSKS' region motif is present at residues 253–257; it reads KLSKR. Lys256 serves as a coordination point for ATP.

The protein belongs to the class-I aminoacyl-tRNA synthetase family. Glutamate--tRNA ligase type 1 subfamily. In terms of assembly, monomer. It depends on Zn(2+) as a cofactor.

It localises to the cytoplasm. The enzyme catalyses tRNA(Glu) + L-glutamate + ATP = L-glutamyl-tRNA(Glu) + AMP + diphosphate. Its function is as follows. Catalyzes the attachment of glutamate to tRNA(Glu) in a two-step reaction: glutamate is first activated by ATP to form Glu-AMP and then transferred to the acceptor end of tRNA(Glu). This chain is Glutamate--tRNA ligase, found in Clostridium botulinum (strain Eklund 17B / Type B).